We begin with the raw amino-acid sequence, 1988 residues long: MKGQQFKLWILEFREIKNSHYFLDSWTQFNSLGSFIHIFFHQERFIKLLDSRIWSILLSRNSQGSTSNRYFTIKGVVLFVVAVVLIYRINNRKMVERKNLYLTGFLPIPMNFIGPRNDTLEESFGSSNINRLIVLLLYLPTSFVQVTDSSQLKGSSDQSRDHFDSISNEDSEYHTLINQKEIQQPLPEEIEEFLGNPTRSIRSFFSDRWSELHMGSNPIERSTRDQKLLKKEQDVSFVPSRRSENKEIVNIFKIITYLQNTVSIHPISSDPGCDMVPKDELDMDSSNKISFLKKNPFIYLFHLFHDRNRRGYTLHHDFESEERFQEMADLFTLSITEPDLVYHKGFAFSIDSYGLDQKQFLNEVFNSRDESKKKYLLVLPPIFYEENDSFYRRIRKKWVRTSPGNDLEDPKQKIVVFASNNIMEAVNQYRLIRNLIQIQYYRYIRNVLNRFFLMNRSDRDLEYGIQRDQIGNDTLNHRTIMKYTINQHLSNFKKGQKKWFDPLILISRTERSMNRDPNAYRYKWSNGSKNFQEHFISEQKSHFHFQVVFDRLRINQYSIDWSEVIDKKDWSKSLRFFLSKLLVFLSKFLLFLSNSLPFFFVSFGNIPIHRSEIHIYELKGPNDRLCNQLLESIGLQIVHLKKLKPFLLDDHYTSQKSKFLINGGTISPFLFNKIPKWMIDSFDTRNNRRKSFDNTDSYFSMISHDQDNWLNPVKPFHRSSLISSFYKATRLRFLNNPHHFCFYCNKRFPFYVDYVEKARINNYDFTYGQFLNILFIRNKIFSLCGGKKKHAFLERDTISPIESQVSNIFIPNDFPQSGDERYNLYKSFHFPIRSNPFVRRAIYSIADISVTPLTEGQIVNFERTYCQPLSDMNLSDSEGKNLHQYLNFNSNMGLIHTPCSEKYLPSEKRKKQSLYRKKCLEKGQMYRTFQRDSAFSTLSKWNLFQTYMPWFFTSTGYKYLNLLFLDTFSDLLPILSSSPKFVSIFDDIMHRSDRSWRILRKKLCLPQWNLISEISIKCLPNLLLSEEMIHRNNESPSISTHLRSPNVREFLYSILFLLLIAVYLVRTHLLFVSRAYSELQTEFEKVKSLMIPSYMIELRKLLDRYPTYERNSFWLKNLFLVALEQLGDSLEEIWGSASGGGPAYGVKSIRSKKKDWNINLINLISIIPNPINRIAFSRNTRHLSHTSKEIYSLIRKNVNGDWIDDKIQSWVWNSDSIDDKEREFLVQFSTLTTEKRIDQILLSLTHSDHLSKNDSGYQMIEQPGVIYLRYLVDIQKKYLMNYKFNTSCLAERRTFLAHYQTITHSQTSCGANSFHFPSHGKLFSLRLALSPGILVIGSIGTGRSYLVKYLATNSYLPFITVFLNKFRDNKPKFIDDSDDDSDDIDDSGDIDDSDDIDRDLDIDTELELLTMMNALTMEMKLEIDQFYITLQFELIKAMSPCIIWIPNIHDLYVNKSSHLYFGLLVNYLYRDFERCSTTNILVIASTHIPQKVDPALIAPNKLNTCIKIRRLLIPQQRKHFFTLSYTRGFHLEKKMFHTNGFGSITMGSNVRDLVALTNEALSISITQRKSIIDTNIIRSALHRQTWDLRSQVRSVQDHGILFYQIGRALAQNVLLSNCSIDPISIYMKKKSCNEGGSYLYNWYFELETSMKKLTILLYLLNCSAGSVVQDLWSLSGPDEKNGITSYVLVENDSHLVHGLLEVEGALFGSSWTEKDCSRFDNDRVTLLLRPEPRNPLDMIQNGSSSIVDQIFLYQKYESKFEEGEGVLDPQQIEEDLFNHIVWAPRIWSPWGFLFDCIERPNELGVPYWARSFRGKRIIYDEEDELQENDSEFLQSGTVQYQTRDRSSKEQGFFLINQFIWDPADPLFFLFQDHPFVSVFSHREFFADEEMAKGLLTSQPAFPTSLEKRWFINIKNTQEKYVELLIHRQRWLRTRTNSSLSKSNGFFRSNTLSESYQYLSNLFLSNGTLLDQMTKTLLRKRWLFPDEMK.

1337–1344 (GSIGTGRS) contributes to the ATP binding site. Residues 1377-1396 (SDDDSDDIDDSGDIDDSDDI) are disordered.

Belongs to the Ycf2 family.

It localises to the plastid. It is found in the chloroplast stroma. Probable ATPase of unknown function. Its presence in a non-photosynthetic plant (Epifagus virginiana) and experiments in tobacco indicate that it has an essential function which is probably not related to photosynthesis. The sequence is that of Protein Ycf2 from Cucumis sativus (Cucumber).